Reading from the N-terminus, the 308-residue chain is Polyprenyl-phosphate transporter (308 aa).

A run of 8 helical transmembrane segments spans residues 15–35 (GLAM…IAFI), 69–89 (INGL…ATLA), 91–111 (LISW…FGLI), 130–150 (LLWL…KPLH), 163–183 (AIAI…LLLI), 200–220 (ILLI…HILS), 228–248 (DVTL…IWPW), and 282–302 (PSQW…VLGL).

The protein belongs to the PopT family.

The protein resides in the cell inner membrane. With respect to regulation, active in alkaline conditions. Functionally, flippase that catalyzes the transport of undecaprenyl phosphate (UndP) across the cytoplasmic membrane, from the external side to the cytoplasmic side. Is involved in UndP recycling during peptidoglycan synthesis. Required for cell shape maintenance at alkaline pH and peptidoglycan maintenance. Required by the cholera pathogen for growth and cell shape maintenance in the intestine. This is Polyprenyl-phosphate transporter from Vibrio cholerae serotype O1 (strain ATCC 39315 / El Tor Inaba N16961).